Reading from the N-terminus, the 529-residue chain is Bifunctional purine biosynthesis protein PurH (529 aa).

The MGS-like domain occupies 1–146 (MAPTALLSVS…KNHAHVAVLT (146 aa)).

This sequence belongs to the PurH family.

It carries out the reaction (6R)-10-formyltetrahydrofolate + 5-amino-1-(5-phospho-beta-D-ribosyl)imidazole-4-carboxamide = 5-formamido-1-(5-phospho-D-ribosyl)imidazole-4-carboxamide + (6S)-5,6,7,8-tetrahydrofolate. The catalysed reaction is IMP + H2O = 5-formamido-1-(5-phospho-D-ribosyl)imidazole-4-carboxamide. Its pathway is purine metabolism; IMP biosynthesis via de novo pathway; 5-formamido-1-(5-phospho-D-ribosyl)imidazole-4-carboxamide from 5-amino-1-(5-phospho-D-ribosyl)imidazole-4-carboxamide (10-formyl THF route): step 1/1. The protein operates within purine metabolism; IMP biosynthesis via de novo pathway; IMP from 5-formamido-1-(5-phospho-D-ribosyl)imidazole-4-carboxamide: step 1/1. This is Bifunctional purine biosynthesis protein PurH from Synechococcus sp. (strain CC9311).